A 53-amino-acid chain; its full sequence is Conotoxin-like peptide 1 (53 aa).

The signal sequence occupies residues 1–18; that stretch reads MGVKSALFIMAVFAAANV. 3 disulfides stabilise this stretch: C25-C39, C32-C43, and C38-C50.

It localises to the secreted. The protein is Conotoxin-like peptide 1 (CTL-1) of Orgyia pseudotsugata multicapsid polyhedrosis virus (OpMNPV).